A 150-amino-acid polypeptide reads, in one-letter code: Endoribonuclease YbeY (150 aa).

Residues histidine 115, histidine 119, and histidine 125 each coordinate Zn(2+).

The protein belongs to the endoribonuclease YbeY family. It depends on Zn(2+) as a cofactor.

The protein localises to the cytoplasm. In terms of biological role, single strand-specific metallo-endoribonuclease involved in late-stage 70S ribosome quality control and in maturation of the 3' terminus of the 16S rRNA. The polypeptide is Endoribonuclease YbeY (Aquifex aeolicus (strain VF5)).